Consider the following 81-residue polypeptide: RBAK downstream neighbor protein (81 aa).

The signal sequence occupies residues Met-1–Ala-22.

It is found in the secreted. The polypeptide is RBAK downstream neighbor protein (RBAKDN) (Homo sapiens (Human)).